Consider the following 333-residue polypeptide: Salivary glue protein Sgs-3 (333 aa).

A signal peptide spans 1–23 (MKLTIATALVGILLIACAHVANG). Residues 51-285 (TCRPPTTTRC…ATARPTSKPC (235 aa)) are disordered. Pro residues predominate over residues 60-73 (CPPPTTTRCPPPTR). The segment covering 74–88 (PAECTATTKRPTARP) has biased composition (low complexity). A compositionally biased stretch (basic residues) spans 89 to 277 (TTKRATTRRT…TKRATTKRAT (189 aa)).

This Drosophila erecta (Fruit fly) protein is Salivary glue protein Sgs-3 (Sgs3).